The primary structure comprises 391 residues: GTPase Obg (391 aa).

Residues Met1 to Leu159 enclose the Obg domain. In terms of domain architecture, OBG-type G spans Ala160 to Glu333. GTP-binding positions include Gly166–Ser173, Phe191–Ile195, Asp213–Gly216, Asn283–Asp286, and Ser314–Ile316. Mg(2+) is bound by residues Ser173 and Thr193. Acidic residues predominate over residues Thr367 to Asp383. Residues Thr367–Asp391 form a disordered region.

The protein belongs to the TRAFAC class OBG-HflX-like GTPase superfamily. OBG GTPase family. Monomer. Mg(2+) is required as a cofactor.

It is found in the cytoplasm. Functionally, an essential GTPase which binds GTP, GDP and possibly (p)ppGpp with moderate affinity, with high nucleotide exchange rates and a fairly low GTP hydrolysis rate. Plays a role in control of the cell cycle, stress response, ribosome biogenesis and in those bacteria that undergo differentiation, in morphogenesis control. The sequence is that of GTPase Obg from Vibrio campbellii (strain ATCC BAA-1116).